Reading from the N-terminus, the 90-residue chain is Early nodulin-36A (90 aa).

The chain is Early nodulin-36A from Glycine max (Soybean).